A 527-amino-acid chain; its full sequence is Glucose-6-phosphate isomerase (527 aa).

Glutamate 323 serves as the catalytic Proton donor. Residues histidine 352 and lysine 454 contribute to the active site.

Belongs to the GPI family.

The protein localises to the cytoplasm. The catalysed reaction is alpha-D-glucose 6-phosphate = beta-D-fructose 6-phosphate. It participates in carbohydrate biosynthesis; gluconeogenesis. Its pathway is carbohydrate degradation; glycolysis; D-glyceraldehyde 3-phosphate and glycerone phosphate from D-glucose: step 2/4. Functionally, catalyzes the reversible isomerization of glucose-6-phosphate to fructose-6-phosphate. In Prochlorococcus marinus (strain MIT 9215), this protein is Glucose-6-phosphate isomerase.